The chain runs to 1452 residues: ABC multidrug transporter A (1452 aa).

The tract at residues 1–20 (MNESHEAGKNSSTNVEEREE) is disordered. 5 N-linked (GlcNAc...) asparagine glycosylation sites follow: Asn-2, Asn-10, Asn-228, Asn-287, and Asn-311. An ABC transporter 1 domain is found at 110–363 (LKTLSLARIA…FLQMGFVCPD (254 aa)). The next 6 helical transmembrane spans lie at 474–494 (VTISSLFGNTIISLVIASIFY), 508–528 (ALLFFAVLMNALGCGLEMLTL), 554–574 (MIMDLPYKILNAITSNIVLYF), 583–603 (GAFFFFVFTSFILTLTMSMFF), 616–636 (VLPFSAVLLLGLSMYTGFAIP), and 725–745 (IGVIFAYMFLLGAVYLVATDF). One can recognise an ABC transporter 2 domain in the interval 802–1044 (FQWKDVCFDI…ILIDYFVRNG (243 aa)). 838-845 (GVSGAGKT) is a binding site for ATP. 5 helical membrane passes run 1153–1173 (ALCVLSALFVGFSLFHTPNTI), 1183–1203 (IFMLLTLFGQLIQQIMPHFVA), 1223–1243 (FLIANIVVELPWNSLMSVLMF), 1271–1291 (LMIWTFLLFSSTFAHFMIAAF), and 1297–1317 (AGNLGNLLFLLCLLFCGVLAT). N-linked (GlcNAc...) asparagine glycans are attached at residues Asn-1350, Asn-1365, and Asn-1391. Residues 1418–1438 (FGLMWVFIVFNIFAACSLYWW) form a helical membrane-spanning segment.

Belongs to the ABC transporter superfamily. ABCG family. PDR (TC 3.A.1.205) subfamily.

The protein localises to the membrane. In terms of biological role, ABC transporter that seems not to be involved in the efflux of toxic substances, at least not the classical compounds such as itraconazole, amphotericin B, voriconazole, posaconazole, ravuconazole, or echinocandins. The polypeptide is ABC multidrug transporter A (Aspergillus fumigatus (Neosartorya fumigata)).